The primary structure comprises 1925 residues: Diacylglycerol kinase eta (1925 aa).

One can recognise a PH domain in the interval 82–175 (AIIREGYLMK…WLGSLKTATA (94 aa)). Phorbol-ester/DAG-type zinc fingers lie at residues 195-245 (HHHW…IANC) and 268-319 (PHQW…PIVC). Residues 350-486 (GNFSPLLVFV…DRWSIMVFEK (137 aa)) enclose the DAGKc domain. Disordered regions lie at residues 620 to 641 (EKDNINSKERRNSRSLRSSEKE), 783 to 805 (ANIDDAGNRLSPSSEAGENTPTE), 847 to 872 (DKERTASGQVESEKEEADVNEKSEPQ), 1013 to 1065 (TTLC…NPQQ), 1113 to 1141 (DRNSGDNHNDNGKNEEADTPTNSAPTRTY), 1167 to 1234 (NTTT…SSAS), 1256 to 1276 (IRRHSSHAPSLAVRDYDKDKD), and 1385 to 1405 (FSAGDKDEKPGKDKERTPTEE). The span at 792–802 (LSPSSEAGENT) shows a compositional bias: polar residues. Residues 863–872 (ADVNEKSEPQ) show a composition bias toward basic and acidic residues. Over residues 1115 to 1128 (NSGDNHNDNGKNEE) the composition is skewed to basic and acidic residues. The span at 1167 to 1187 (NTTTSTSSSISTTTTTSTTST) shows a compositional bias: low complexity. The segment covering 1386 to 1405 (SAGDKDEKPGKDKERTPTEE) has biased composition (basic and acidic residues). The region spanning 1862–1925 (WSVNEVVTWL…LQAIKDLSEN (64 aa)) is the SAM domain.

This sequence belongs to the eukaryotic diacylglycerol kinase family.

The protein localises to the cytoplasm. The enzyme catalyses a 1,2-diacyl-sn-glycerol + ATP = a 1,2-diacyl-sn-glycero-3-phosphate + ADP + H(+). Its function is as follows. Phosphorylates diacylglycerol (DAG) to generate phosphatidic acid (PA). The chain is Diacylglycerol kinase eta from Drosophila mojavensis (Fruit fly).